The sequence spans 445 residues: E3 ubiquitin-protein ligase MYLIP (445 aa).

The 279-residue stretch at 1 to 279 (MLCYVTRPDA…ETHAFYRCDT (279 aa)) folds into the FERM domain. Residues 341-363 (RNDQSPPSSPLKSSDSSMSCSSC) form a disordered region. Over residues 350-363 (PLKSSDSSMSCSSC) the composition is skewed to low complexity. Residues Cys360, Cys363, and Cys368 each contribute to the Fe cation site. An RING-type zinc finger spans residues 387–422 (CMVCCEEEINSTFCPCGHTVCCESCAAQLQSCPVCR). Residues 431-433 (VYL) form a critical for homodimerization region.

Homodimer. Interacts with the E2 ubiquitin-conjugating enzyme, UBE2D1 (via RING-type zinc finger). Interacts with myosin regulatory light chain (MRLC) and TMEM4. Autoubiquitinated. As to expression, expressed in developing and adult brain, hippocampus, cerebellum, cerebral cortex, thalamus and substantia nigra. Predominantly found in neurons.

The protein resides in the cytoplasm. Its subcellular location is the cell membrane. The catalysed reaction is S-ubiquitinyl-[E2 ubiquitin-conjugating enzyme]-L-cysteine + [acceptor protein]-L-lysine = [E2 ubiquitin-conjugating enzyme]-L-cysteine + N(6)-ubiquitinyl-[acceptor protein]-L-lysine.. Its pathway is protein modification; protein ubiquitination. Its activity is regulated as follows. Can bind 1 iron ion per dimer. Iron binding seems to decrease LDLR degradation activity. Functionally, E3 ubiquitin-protein ligase that mediates ubiquitination and subsequent proteasomal degradation of myosin regulatory light chain (MRLC), LDLR, VLDLR and LRP8. Activity depends on E2 enzymes of the UBE2D family. Proteasomal degradation of MRLC leads to inhibit neurite outgrowth in presence of NGF by counteracting the stabilization of MRLC by saposin-like protein (CNPY2/MSAP) and reducing CNPY2-stimulated neurite outgrowth. Acts as a sterol-dependent inhibitor of cellular cholesterol uptake by mediating ubiquitination and subsequent degradation of LDLR. This chain is E3 ubiquitin-protein ligase MYLIP (Mylip), found in Rattus norvegicus (Rat).